The following is a 499-amino-acid chain: Cytochrome P450 76T24 (499 aa).

The helical transmembrane segment at 3-23 (VDILLSLVLAFFGWAAIYFLT) threads the bilayer. 4 N-linked (GlcNAc...) asparagine glycosylation sites follow: N55, N76, N279, and N284. C442 lines the heme pocket.

Belongs to the cytochrome P450 family.

Its subcellular location is the membrane. This chain is Cytochrome P450 76T24, found in Catharanthus roseus (Madagascar periwinkle).